The following is a 396-amino-acid chain: Probable isocitrate dehydrogenase [NAD] gamma 2, mitochondrial (396 aa).

A mitochondrion-targeting transit peptide spans 1-25 (MLAVTSCSMKTVLQYAVFLGHSREV). Position 117 (threonine 117) interacts with citrate. Substrate contacts are provided by arginine 133, arginine 164, and aspartate 251. Aspartate 251 contributes to the Mn(2+) binding site. An ADP-binding site is contributed by asparagine 321.

The protein belongs to the isocitrate and isopropylmalate dehydrogenases family. In terms of assembly, heterooligomer of subunits alpha (IDH3A), beta (IDH3B), and gamma (IDH3G) in the apparent ratio of 2:1:1. The heterodimer containing one IDH3A and one IDH3B subunit and the heterodimer containing one IDH3A and one IDH3G subunit assemble into a heterotetramer (which contains two subunits of IDH3A, one of IDH3B and one of IDH3G) and further into the heterooctamer. Mg(2+) is required as a cofactor. The cofactor is Mn(2+).

The protein resides in the mitochondrion. The heterotetramer and the heterodimer composed of IDH3A and IDH3G subunits can be allosterically activated by citrate (CIT) or/and ADP, and the two activators can act independently or synergistically. The heterodimer composed of IDH3A and IDH3B subunits cannot be allosterically regulated and the allosteric regulation of the heterotetramer is through the IDH3G subunit and not the IDH3B subunit. The IDH3G subunit contains the allosteric site which consists of a CIT-binding site and an ADP-binding site, and the binding of CIT and ADP causes conformational changes at the allosteric site which are transmitted to the active site in the catalytic subunit (IDH3A) through a cascade of conformational changes at the heterodimer interface, leading to stabilization of the isocitrate-binding at the active site and thus activation of the enzyme. ATP can activate the heterotetramer and the heterodimer composed of IDH3A and IDH3G subunits at low concentrations but inhibits their activities at high concentrations, whereas ATP exhibits only inhibitory effect on the heterodimer composed of IDH3A and IDH3B subunits. Regulatory subunit which plays a role in the allosteric regulation of the enzyme catalyzing the decarboxylation of isocitrate (ICT) into alpha-ketoglutarate. The heterodimer composed of the alpha (IDH3A) and beta (IDH3B) subunits and the heterodimer composed of the alpha (IDH3A) and gamma (IDH3G) subunits, have considerable basal activity but the full activity of the heterotetramer (containing two subunits of IDH3A, one of IDH3B and one of IDH3G) requires the assembly and cooperative function of both heterodimers. The chain is Probable isocitrate dehydrogenase [NAD] gamma 2, mitochondrial from Mus musculus (Mouse).